The chain runs to 610 residues: T-cell immunomodulatory protein (610 aa).

Positions 1-32 are cleaved as a signal peptide; sequence MAAGRLPSARAVLAPLFLGLALLSVGPAPARA. 7 N-linked (GlcNAc...) asparagine glycosylation sites follow: asparagine 35, asparagine 123, asparagine 138, asparagine 145, asparagine 150, asparagine 175, and asparagine 241. The stretch at 98 to 135 is one FG-GAP 1; atypical repeat; sequence LVTSVVPGDYDGDSQMDVLLTYFPQNHTNSELGAVIFW. Residues 153-183 form an FG-GAP 2; atypical repeat; sequence FHDQPLIMDFNGDLIPDVFGITNESSQPQIL. Residues 256-291 form an FG-GAP 3; atypical repeat; that stretch reads VVGQSAFADFDGDGHMDHLLPGCEDKDCQKSAIYLM. Asparagine 351, asparagine 369, and asparagine 480 each carry an N-linked (GlcNAc...) asparagine glycan. A helical transmembrane segment spans residues 565-585; sequence VLLTAVALIGVCIFILAIIAI.

The protein belongs to the TIP family. Interacts with RUVBL1, RUVBL2 and alpha-tubulin.

The protein localises to the secreted. Its subcellular location is the membrane. Functionally, modulator of T-cell function. Has a protective effect in graft versus host disease model. The protein is T-cell immunomodulatory protein of Mus musculus (Mouse).